The primary structure comprises 239 residues: Phosphothreonine lyase OspF (239 aa).

The Proton donor role is filled by histidine 104. The active-site Proton acceptor is the lysine 134.

The protein belongs to the phosphothreonine lyase family.

The protein resides in the secreted. Functionally, catalyzes the removal of the phosphate group from the phosphothreonine in the mitogen-activated protein kinases such as MAPK2/ERK2, MAPK3/ERK1, MAPK8 and MAPK14 in an irreversible reaction, thus preventing the downstream phosphorylation of histone H3. This epigenetic modification results in inhibition of the transcription of a specific subset of pro-inflammatory genes, and ultimately to a reduced immune response against the invading pathogen. The diminished immune response enhances the bacterium's ability to disseminate and multiply within the host. The chain is Phosphothreonine lyase OspF (ospF) from Shigella sonnei (strain Ss046).